A 6930-amino-acid chain; its full sequence is Replicase polyprotein 1ab (6930 aa).

The CoV Nsp1 globular domain maps to 10–131; that stretch reads LKSMVVTTLK…DIDIQIRKYG (122 aa). The 27-residue stretch at 149–175 folds into the BetaCoV Nsp1 C-terminal domain; it reads DPGPDVGPYLDFPDNCCPTKPKAKRGG. The region spanning 177 to 431 is the CoV Nsp2 N-terminal domain; that stretch reads VYLSDQYGFD…ELVEYLIEGI (255 aa). Zn(2+)-binding residues include Cys-312, Cys-315, Cys-331, and Cys-333. The segment at 312 to 333 is C4; it reads CSYCDYYGWTPLKDIGTVNCLC. The CoV Nsp2 middle domain maps to 432–644; it reads RVDADTLDNP…CDLLTTIMSK (213 aa). One can recognise a CoV Nsp2 C-terminal domain in the interval 646 to 772; that stretch reads LTSVKWAGCK…LGKAFRLRGG (127 aa). The Ubiquitin-like 1 domain maps to 775-885; the sequence is SKVTFGDEEV…MYFSLEDAVP (111 aa). A Macro 1 domain is found at 930–1097; the sequence is MTTPCGYTKI…LYERALATSF (168 aa). Positions 1188 to 1207 are disordered; that stretch reads KRPPPIVPQQTVEQQPQEIS. The span at 1195–1206 shows a compositional bias: low complexity; sequence PQQTVEQQPQEI. The 125-residue stretch at 1216–1340 folds into the Macro 2 domain; the sequence is LVDVVSMSFS…LYRAYFNGVF (125 aa). The region spanning 1345 to 1417 is the DPUP domain; that stretch reads TAVQDFVVDI…VSKARAYLET (73 aa). The region spanning 1423-1478 is the Ubiquitin-like 2 domain; that stretch reads EPLIKVLTTVDGINYSTVLVSTAQSYRAQIGTVFCDGHDWSNKNPMPTDEGTHLYK. Residues 1492 to 1757 form the Peptidase C16 domain; that stretch reads EYYGVDDSNI…RTTIDPDFSK (266 aa). Cys-1533 (for PL-PRO activity) is an active-site residue. Zn(2+)-binding residues include Cys-1610, Cys-1613, Cys-1645, and Cys-1647. The C4-type zinc-finger motif lies at 1610–1647; the sequence is CEHCGVSQMVFTGTDACTFYGSVVLDDLYAPVSVVCQC. Active-site for PL-PRO activity residues include His-1694 and Asp-1708. Positions 1770-1870 constitute a Nucleic acid-binding domain; the sequence is PIEVVAAPKL…PLLSTVVVNT (101 aa). The G2M domain maps to 1883-2012; that stretch reads PVNNETSEEP…KTADFVRSTN (130 aa). The next 3 membrane-spanning stretches (helical) occupy residues 2015–2035, 2040–2060, and 2081–2101; these read SKCVGLLCLFYQLFMRFWLLV, IVKVSGIIAYNTGCGVTTCVL, and YMLYIWFVWTCLTICGVWLSE. Positions 2015–2238 are HD1; that stretch reads SKCVGLLCLF…IVIAFLWLCY (224 aa). The region spanning 2105–2162 is the 3Ecto domain; it reads PSLVTRFKYFLGIVMPCDYVLVNETGTGWLHHLCMAGMDSLDYPALRMQQHRYGSPYN. An intrachain disulfide couples Cys-2121 to Cys-2138. The next 3 helical transmembrane spans lie at 2162-2182, 2183-2203, and 2218-2238; these read NYTYILMLLEAFFAYLLYTPA, LPIVGILAVLHLIVLYLPIPL, and LVPFTSMLRMYIVIAFLWLCY. Residues 2239–2329 form a Y1 region; sequence KGFLHVRYGC…QFKRPIIHTD (91 aa). The CoV Nsp3 Y domain maps to 2239 to 2610; sequence KGFLHVRYGC…MVTPFKIIGG (372 aa). Zn(2+)-binding residues include His-2243, Cys-2248, Cys-2253, Cys-2256, Cys-2289, His-2292, Cys-2296, and Cys-2299. Positions 2243–2256 are ZF1; that stretch reads HVRYGCNNVACLMC. The interval 2289–2299 is ZF2; it reads CTKHNWNCVSC. Positions 2330–2425 are Y2; it reads EAYYEVTSVE…LVDKRMVGVV (96 aa). The interval 2330–2610 is coV-Y; sequence EAYYEVTSVE…MVTPFKIIGG (281 aa). Residues 2426–2509 form a Y3 region; the sequence is GDDATIARAM…SCIRLCHQEG (84 aa). The interval 2510 to 2610 is Y4; the sequence is WEWTTDSWNN…MVTPFKIIGG (101 aa). Transmembrane regions (helical) follow at residues 2621 to 2641, 2719 to 2739, 2865 to 2885, 2887 to 2907, 2916 to 2936, 2946 to 2966, and 2970 to 2990; these read LIHVFMLLVVLNPQWFTPWYI, VGTTLLPLVNYGLGAVGSVCY, AFDLFMNMLLPIFTPVGAVDI, TSILMGALLAVVVSMSLYYLL, YSGVIFTNILAFVLNVIVLCL, IYAMVFLYATCYFGSDIACMM, and FLIMFAGVVPLWVTVLYIVVV. The segment at 2621–2990 is HD2; that stretch reads LIHVFMLLVV…WVTVLYIVVV (370 aa). A Nsp4C domain is found at 3007–3103; it reads VQVGDLAFHS…RCSVASAALQ (97 aa). In terms of domain architecture, Peptidase C30 spans 3104–3409; it reads AGLTRMAHPS…GRQMLGVKLQ (306 aa). Catalysis depends on for 3CL-PRO activity residues His-3144 and Cys-3248. Helical transmembrane passes span 3423 to 3443, 3449 to 3469, 3474 to 3494, 3517 to 3537, 3569 to 3589, 3592 to 3612, and 3620 to 3640; these read FAIIFVLTILILLQLAQWTFV, TLLLPLIGFVAVCVGFVSLLI, TYLTVYLLPVAMVTAYYNFQY, VIGTDLLTMLIISVACTLLSV, VAISYLTFMVSVFTNYTGVAC, LYAAQFMVWVLKFLDPTILLL, and LVCYLLVGYLCTCYFGVFNLI. Residues 3423-3640 are HD3; the sequence is FAIIFVLTIL…TCYFGVFNLI (218 aa). A RdRp Nsp7 cofactor domain is found at 3700-3782; that stretch reads SNMTDLKCTS…SILENNSVLQ (83 aa). Positions 3783 to 3982 constitute a RdRp Nsp8 cofactor domain; that stretch reads AVASEFSNLS…QQATSPVKLQ (200 aa). The 112-residue stretch at 3983 to 4094 folds into the Nsp9 ssRNA-binding domain; the sequence is NNELMPQTVK…GTLACTVRLH (112 aa). Positions 4095-4233 constitute an ExoN/MTase coactivator domain; the sequence is AGSATEVASN…CSSLREINLQ (139 aa). Zn(2+)-binding residues include Cys-4168, Cys-4171, His-4177, Cys-4184, Cys-4211, Cys-4214, Cys-4222, and Cys-4224. 2 zinc fingers span residues 4168-4184 and 4211-4224; these read CLYCRCHIEHPGASGVC and CAVCNMWQGYGCPC. The 256-residue stretch at 4239-4494 folds into the NiRAN domain; that stretch reads FLNRVRGTSG…AAECHVDGDF (256 aa). 2 residues coordinate Mn(2+): Asn-4442 and Asp-4451. A Nsp12 Interface domain is found at 4499 to 4597; the sequence is RVWDICKYDY…MNQDIRQHAQ (99 aa). Zn(2+) contacts are provided by His-4528, Cys-4534, Cys-4539, Cys-4543, and Cys-4720. Residues 4598-5165 enclose the Nsp12 RNA-dependent RNA polymerase domain; sequence RLSLRELLVY…NMYMESATLQ (568 aa). Residues 4600–4814 form a rdRp Fingers N-ter region; the sequence is SLRELLVYAA…HQKMLKSIAA (215 aa). Residues 4815–4853 form a rdRp Palm N-ter region; the sequence is ARGASVVIGTTKFYGGWNRMLRTLCEGVENPHLMGWDYP. A RdRp catalytic domain is found at 4845-5007; sequence PHLMGWDYPK…CYNADYAQKG (163 aa). The rdRp Fingers C-ter stretch occupies residues 4854 to 4912; that stretch reads KCDRAMPNLLRIFASLILARKHATCCNASERFYRLANECAQVLSEMVLCGGGFYVKPGG. The Zn(2+) site is built by His-4875, Cys-4878, and Cys-4879. The interval 4913 to 5048 is rdRp Palm C-ter; the sequence is TSSGDSTTAY…TKGPHEFCSQ (136 aa). Catalysis depends on residues Ser-4992, Asp-4993, and Asp-4994. Residues 5049–5165 form a rdRp Thumb region; it reads HTMLVDMKGE…NMYMESATLQ (117 aa). The CV ZBD domain maps to 5166–5278; sequence SVGTCVVCNS…ADFNSLATCD (113 aa). Zn(2+) contacts are provided by Cys-5170, Cys-5173, Cys-5181, Cys-5184, Cys-5191, Cys-5194, His-5198, His-5204, Cys-5215, Cys-5220, Cys-5237, and His-5240. In terms of domain architecture, (+)RNA virus helicase ATP-binding spans 5412 to 5603; it reads TKLVGLYPAM…MVAVGPDIFL (192 aa). 5447–5454 contributes to the ATP binding site; sequence GPPGTGKS. In terms of domain architecture, (+)RNA virus helicase C-terminal spans 5604–5778; the sequence is ATCYRCPKEI…VTVGLFKDCA (175 aa). One can recognise an ExoN domain in the interval 5838–6056; it reads LFITREQAIR…RCLAIHDCFC (219 aa). Catalysis depends on residues Asp-5856, Glu-5858, and Glu-5957. 7 residues coordinate Zn(2+): Cys-5973, Cys-5976, Cys-5992, His-5995, His-6026, Cys-6030, and His-6033. Residues His-6037 and Asp-6042 contribute to the active site. Residue Cys-6048 coordinates Zn(2+). One can recognise an N7-MTase domain in the interval 6065-6296; sequence YPIIANELAI…NLWSTFVKLQ (232 aa). 6100–6106 lines the S-adenosyl-L-methionine pocket; it reads DIGNPKA. The segment at 6180–6194 is gpppA-binding; sequence CNGGSLYVNQHAFHT. Zn(2+) is bound by residues Cys-6218, Cys-6242, Cys-6253, and His-6256. The 61-residue stretch at 6297-6357 folds into the Nsp15 N-terminal oligomerization domain; it reads SLENVAYNVL…NVAFELWAKR (61 aa). Residues 6358–6476 form the AV-Nsp11N/CoV-Nsp15M domain; the sequence is SVNVVPEVKL…YAMRKDGAFV (119 aa). Residues 6493–6630 enclose the NendoU domain; it reads QPRTQLEIDF…KGGKISTFYP (138 aa). Residues His-6523, His-6537, Lys-6576, Lys-6679, Asp-6763, Lys-6803, and Glu-6836 contribute to the active site. The Nidovirus-type SAM-dependent 2'-O-MTase domain occupies 6635–6928; it reads KQDWKPGYSM…DIGVRGVACS (294 aa).

It belongs to the coronaviruses polyprotein 1ab family. Interacts with host PHB and PHB2. As to quaternary structure, interacts with papain-like protease nsp3 and non-structural protein 6. In terms of assembly, monomer. Homodimer. Only the homodimer shows catalytic activity. Interacts with nsp8 and nsp12 to form the replication-transcription complex (RTC): nsp12, nsp7, two subunits of nsp8, and up to two subunits of nsp13. As to quaternary structure, interacts with nsp7, nsp13 and nsp12 to form the replication-transcription complex (RTC): nsp12, nsp7, two subunits of nsp8, and up to two subunits of nsp13. In terms of assembly, interacts with nsp12. Interacts with proofreading exoribonuclease nsp14 and 2'-O-methyltransferase nsp16; these interactions enhance nsp14 and nsp16 enzymatic activities. As to quaternary structure, interacts with nsp7 and nsp8 to form the replication-transcription complex (RTC): nsp12, nsp7, two subunits of nsp8, and up to two subunits of nsp13. Interacts with nsp9. In terms of assembly, interacts with nsp8 to form the replication-transcription complex (RTC): nsp12, nsp7, two subunits of nsp8, and up to two subunits of nsp13. Requires Mn(2+) as cofactor. It depends on Mg(2+) as a cofactor. Specific enzymatic cleavages in vivo by its own proteases yield mature proteins. 3CL-PRO and PL-PRO proteinases are autocatalytically processed.

It localises to the host membrane. The protein resides in the host cytoplasm. Its subcellular location is the host perinuclear region. It is found in the host endoplasmic reticulum-Golgi intermediate compartment. It catalyses the reaction RNA(n) + a ribonucleoside 5'-triphosphate = RNA(n+1) + diphosphate. The catalysed reaction is ATP + H2O = ADP + phosphate + H(+). It carries out the reaction Thiol-dependent hydrolysis of ester, thioester, amide, peptide and isopeptide bonds formed by the C-terminal Gly of ubiquitin (a 76-residue protein attached to proteins as an intracellular targeting signal).. The enzyme catalyses a 5'-end (N(7)-methyl 5'-triphosphoguanosine)-ribonucleoside in mRNA + S-adenosyl-L-methionine = a 5'-end (N(7)-methyl 5'-triphosphoguanosine)-(2'-O-methyl-ribonucleoside) in mRNA + S-adenosyl-L-homocysteine + H(+). It catalyses the reaction uridylyl-uridylyl-ribonucleotide-RNA = a 3'-end uridylyl-2',3'-cyclophospho-uridine-RNA + a 5'-end dephospho-ribonucleoside-RNA. The catalysed reaction is a 5'-end diphospho-ribonucleoside in mRNA + GTP + H(+) = a 5'-end (5'-triphosphoguanosine)-ribonucleoside in mRNA + diphosphate. It carries out the reaction a 5'-end (5'-triphosphoguanosine)-ribonucleoside in mRNA + S-adenosyl-L-methionine = a 5'-end (N(7)-methyl 5'-triphosphoguanosine)-ribonucleoside in mRNA + S-adenosyl-L-homocysteine. In terms of biological role, the replicase polyprotein of coronaviruses is a multifunctional protein: it contains the activities necessary for the transcription of negative stranded RNA, leader RNA, subgenomic mRNAs and progeny virion RNA as well as proteinases responsible for the cleavage of the polyprotein into functional products. Its function is as follows. Inhibits host translation by interacting with the 40S ribosomal subunit. The nsp1-40S ribosome complex further induces an endonucleolytic cleavage near the 5'UTR of host mRNAs, targeting them for degradation. Viral mRNAs are not susceptible to nsp1-mediated endonucleolytic RNA cleavage thanks to the presence of a 5'-end leader sequence and are therefore protected from degradation. By suppressing host gene expression, nsp1 facilitates efficient viral gene expression in infected cells and evasion from host immune response. May play a role in the modulation of host cell survival signaling pathway by interacting with host PHB and PHB2. Indeed, these two proteins play a role in maintaining the functional integrity of the mitochondria and protecting cells from various stresses. Functionally, responsible for the cleavages located at the N-terminus of the replicase polyprotein. In addition, PL-PRO possesses a deubiquitinating/deISGylating activity and processes both 'Lys-48'- and 'Lys-63'-linked polyubiquitin chains from cellular substrates. Participates together with nsp4 in the assembly of virally-induced cytoplasmic double-membrane vesicles necessary for viral replication. Antagonizes innate immune induction of type I interferon by blocking the phosphorylation, dimerization and subsequent nuclear translocation of host IRF3. Also prevents host NF-kappa-B signaling. In terms of biological role, participates in the assembly of virally-induced cytoplasmic double-membrane vesicles necessary for viral replication. Its function is as follows. Cleaves the C-terminus of replicase polyprotein at 11 sites. Recognizes substrates containing the core sequence [ILMVF]-Q-|-[SGACN]. Also able to bind an ADP-ribose-1''-phosphate (ADRP). Plays a role in the initial induction of autophagosomes from host endoplasmic reticulum. Later, limits the expansion of these phagosomes that are no longer able to deliver viral components to lysosomes. Functionally, forms a hexadecamer with nsp8 (8 subunits of each) that may participate in viral replication by acting as a primase. Alternatively, may synthesize substantially longer products than oligonucleotide primers. In terms of biological role, forms a hexadecamer with nsp7 (8 subunits of each) that may participate in viral replication by acting as a primase. Alternatively, may synthesize substantially longer products than oligonucleotide primers. Its function is as follows. Forms a primer, NSP9-pU, which is utilized by the polymerase for the initiation of RNA chains. Interacts with ribosome signal recognition particle RNA (SRP). Together with NSP8, suppress protein integration into the cell membrane, thereby disrupting host immune defenses. Plays a pivotal role in viral transcription by stimulating both nsp14 3'-5' exoribonuclease and nsp16 2'-O-methyltransferase activities. Therefore plays an essential role in viral mRNAs cap methylation. Functionally, RNA-directed RNA polymerase that catalyzes the transcription of viral genomic and subgenomic RNAs. Acts in complex with nsp7 and nsp8 to transcribe both the minus and positive strands of genomic RNA. The kinase-like NiRAN domain of NSP12 attaches one or more nucleotides to the amino terminus of NSP9, forming a covalent RNA-protein intermediate that serves as transcription/replication primer. Subgenomic RNAs (sgRNAs) are formed by discontinuous transcription: The polymerase has the ability to pause at transcription-regulating sequences (TRS) and jump to the leader TRS, resulting in a major deletion. This creates a series of subgenomic RNAs that are replicated, transcribed and translated. In addition, Nsp12 is a subunit of the viral RNA capping enzyme that catalyzes the RNA guanylyltransferase reaction for genomic and sub-genomic RNAs. Subsequently, the NiRAN domain transfers RNA to GDP, and forms the core cap structure GpppA-RNA. In terms of biological role, multi-functional protein with a zinc-binding domain in N-terminus displaying RNA and DNA duplex-unwinding activities with 5' to 3' polarity. Activity of helicase is dependent on magnesium. Its function is as follows. Plays a role in viral RNA synthesis through two distinct activities. The N7-guanine methyltransferase activity plays a role in the formation of the cap structure GpppA-RNA. The proofreading exoribonuclease reduces the sensitivity of the virus to RNA mutagens during replication. This activity acts on both ssRNA and dsRNA in a 3'-5' direction. Plays a role in viral transcription/replication and prevents the simultaneous activation of host cell dsRNA sensors, such as MDA5/IFIH1, OAS, and PKR. Acts by degrading the 5'-polyuridines generated during replication of the poly(A) region of viral genomic and subgenomic RNAs. Catalyzes a two-step reaction in which a 2'3'-cyclic phosphate (2'3'-cP) is first generated by 2'-O transesterification, which is then hydrolyzed to a 3'-phosphate (3'-P). If not degraded, poly(U) RNA would hybridize with poly(A) RNA tails and activate host dsRNA sensors. Functionally, methyltransferase that mediates mRNA cap 2'-O-ribose methylation to the 5'-cap structure of viral mRNAs. N7-methyl guanosine cap is a prerequisite for binding of nsp16. Therefore plays an essential role in viral mRNAs cap methylation which is essential to evade immune system. This is Replicase polyprotein 1ab (rep) from Bat coronavirus HKU9 (BtCoV).